The primary structure comprises 119 residues: Hisactophilin-3 (119 aa).

A lipid anchor (N-myristoyl glycine) is attached at glycine 2. The tract at residues 8–110 is contains several HHXH repeats; the sequence is SHHGHFLSAE…SIYTTHHHHH (103 aa). 2 tandem repeats follow at residues 34 to 47 and 75 to 87. Positions 34 to 87 are 2 X 13 AA approximate repeats; the sequence is FHVENHGHHKVAIRTHANKYVSINDNNDVYISHHFHGEHSLFHLEHHGGKVSIK.

Belongs to the hisactophilin family. Post-translationally, phosphorylated.

The protein localises to the cytoplasm. The protein resides in the cell membrane. Its function is as follows. May act as an intracellular pH sensor that links chemotactic signals to responses in the microfilament system of the cells by nucleating actin polymerization or stabilizing the filaments. The chain is Hisactophilin-3 (hatC) from Dictyostelium discoideum (Social amoeba).